We begin with the raw amino-acid sequence, 61 residues long: MAKTSITVRHQRKKKFEVREYNRCPICGRSRGYLRRFDMCRICFRKLASGAQIPGVVKSSW.

The Zn(2+) site is built by C24, C27, C40, and C43.

It belongs to the universal ribosomal protein uS14 family. Zinc-binding uS14 subfamily. Part of the 30S ribosomal subunit. Contacts proteins S3 and S10. Zn(2+) serves as cofactor.

Its function is as follows. Binds 16S rRNA, required for the assembly of 30S particles and may also be responsible for determining the conformation of the 16S rRNA at the A site. In Leptospira borgpetersenii serovar Hardjo-bovis (strain JB197), this protein is Small ribosomal subunit protein uS14.